Here is a 1033-residue protein sequence, read N- to C-terminus: Probable LRR receptor-like serine/threonine-protein kinase At1g56140 (1033 aa).

The N-terminal stretch at 1–28 (MLRLWRYLCLLLTVWFLCNFGPVYVVRA) is a signal peptide. The Extracellular segment spans residues 29-636 (QNRTGATTHP…PSKGKSMTGT (608 aa)). 3 N-linked (GlcNAc...) asparagine glycosylation sites follow: N30, N60, and N94. LRR repeat units follow at residues 97–121 (ICRI…LWTL), 122–145 (EYLT…LGNL), 147–169 (RMRW…IGLL), 170–193 (TDLR…IGRC), 195–217 (KLQQ…FANL), 241–264 (WTKL…SFSN), 265–288 (LTSL…FIKD), 289–313 (MKSL…IGEY), 314–337 (SSLR…LFNL), 339–361 (QLTH…KGQS), 363–382 (SNVD…WVSL), 383–406 (PNLN…VLSG), and 422–445 (IYSD…VFER). N144 carries N-linked (GlcNAc...) asparagine glycosylation. N-linked (GlcNAc...) asparagine glycosylation is present at N181. Residues N264, N280, and N301 are each glycosylated (N-linked (GlcNAc...) asparagine). N-linked (GlcNAc...) asparagine glycans are attached at residues N347 and N351. N393 carries an N-linked (GlcNAc...) asparagine glycan. An N-linked (GlcNAc...) asparagine glycan is attached at N579. A helical membrane pass occupies residues 637–657 (IVGVIVGVGLLSIISGVVIFI). At 658-1033 (IRKRRKRYTD…MLGAQMNEGR (376 aa)) the chain is on the cytoplasmic side. Position 682 is a phosphothreonine (T682). Residues 693–951 (FDPSNKLGEG…LCTQTSHALR (259 aa)) form the Protein kinase domain. Residues 699–707 (LGEGGFGPV) and K721 each bind ATP. Y766 is modified (phosphotyrosine). D817 functions as the Proton acceptor in the catalytic mechanism. Phosphoserine occurs at positions 821 and 850. 2 positions are modified to phosphothreonine: T851 and T856. Y864 bears the Phosphotyrosine mark. A disordered region spans residues 1012–1033 (SEISPRNNDARPMLGAQMNEGR).

It belongs to the protein kinase superfamily. Ser/Thr protein kinase family.

Its subcellular location is the membrane. The enzyme catalyses L-seryl-[protein] + ATP = O-phospho-L-seryl-[protein] + ADP + H(+). It catalyses the reaction L-threonyl-[protein] + ATP = O-phospho-L-threonyl-[protein] + ADP + H(+). The sequence is that of Probable LRR receptor-like serine/threonine-protein kinase At1g56140 from Arabidopsis thaliana (Mouse-ear cress).